The chain runs to 534 residues: Cysteine/serine-rich nuclear protein 2 (534 aa).

Methionine 1 bears the N-acetylmethionine mark. Disordered stretches follow at residues 1-52 and 480-534; these read MDAF…FTPT and DCGL…PLAV. Over residues 31–40 the composition is skewed to low complexity; it reads SSDSADSCDS. The span at 42–52 shows a compositional bias: polar residues; that stretch reads NPPTTASFTPT. The span at 480-492 shows a compositional bias: basic and acidic residues; the sequence is DCGLKEPESEDLH.

Belongs to the AXUD1 family. As to expression, highest expression detected in thymus, brain and ovary. Low levels detected in naive T-cells.

Its subcellular location is the nucleus. Binds to the consensus sequence 5'-AGAGTG-3' and has transcriptional activator activity. May play a role in apoptosis. The chain is Cysteine/serine-rich nuclear protein 2 (Csrnp2) from Mus musculus (Mouse).